We begin with the raw amino-acid sequence, 344 residues long: GTP 3',8-cyclase (344 aa).

The 226-residue stretch at 19 to 244 (PFARPITYLR…TPLAERTGGP (226 aa)) folds into the Radical SAM core domain. Arg-28 lines the GTP pocket. Positions 35 and 39 each coordinate [4Fe-4S] cluster. An S-adenosyl-L-methionine-binding site is contributed by Tyr-41. [4Fe-4S] cluster is bound at residue Cys-42. A GTP-binding site is contributed by Arg-77. Residue Gly-81 coordinates S-adenosyl-L-methionine. Thr-110 lines the GTP pocket. Ser-134 contributes to the S-adenosyl-L-methionine binding site. A GTP-binding site is contributed by Lys-170. Met-204 contributes to the S-adenosyl-L-methionine binding site. Residues Cys-268 and Cys-271 each contribute to the [4Fe-4S] cluster site. 273–275 (RVR) contributes to the GTP binding site. Cys-285 is a binding site for [4Fe-4S] cluster.

It belongs to the radical SAM superfamily. MoaA family. In terms of assembly, monomer and homodimer. The cofactor is [4Fe-4S] cluster.

It catalyses the reaction GTP + AH2 + S-adenosyl-L-methionine = (8S)-3',8-cyclo-7,8-dihydroguanosine 5'-triphosphate + 5'-deoxyadenosine + L-methionine + A + H(+). The protein operates within cofactor biosynthesis; molybdopterin biosynthesis. Catalyzes the cyclization of GTP to (8S)-3',8-cyclo-7,8-dihydroguanosine 5'-triphosphate. The polypeptide is GTP 3',8-cyclase (Paracoccus denitrificans (strain Pd 1222)).